The sequence spans 218 residues: Urease accessory protein UreG (218 aa).

22–29 (GPVGSGKT) is a GTP binding site.

Belongs to the SIMIBI class G3E GTPase family. UreG subfamily. As to quaternary structure, homodimer. UreD, UreF and UreG form a complex that acts as a GTP-hydrolysis-dependent molecular chaperone, activating the urease apoprotein by helping to assemble the nickel containing metallocenter of UreC. The UreE protein probably delivers the nickel.

It is found in the cytoplasm. In terms of biological role, facilitates the functional incorporation of the urease nickel metallocenter. This process requires GTP hydrolysis, probably effectuated by UreG. The chain is Urease accessory protein UreG from Polaromonas naphthalenivorans (strain CJ2).